Here is a 244-residue protein sequence, read N- to C-terminus: Putative nucleosome assembly protein C36B7.08c (244 aa).

Residues Glu-199–Asn-244 form a disordered region. Residues Met-201 to Lys-232 show a composition bias toward acidic residues. Ser-211 is modified (phosphoserine).

The protein belongs to the nucleosome assembly protein (NAP) family.

The protein localises to the nucleus. The chain is Putative nucleosome assembly protein C36B7.08c from Schizosaccharomyces pombe (strain 972 / ATCC 24843) (Fission yeast).